We begin with the raw amino-acid sequence, 112 residues long: Large ribosomal subunit protein bL17 (112 aa).

It belongs to the bacterial ribosomal protein bL17 family. In terms of assembly, part of the 50S ribosomal subunit. Contacts protein L32.

This is Large ribosomal subunit protein bL17 from Desulforamulus reducens (strain ATCC BAA-1160 / DSM 100696 / MI-1) (Desulfotomaculum reducens).